Here is a 1216-residue protein sequence, read N- to C-terminus: RAB11-binding protein RELCH (1216 aa).

2 disordered regions span residues Met1–Gly73 and Gly135–Arg177. Position 2 is an N-acetylalanine (Ala2). Residues Ser20 and Ser22 each carry the phosphoserine modification. The span at Asp21–Ala31 shows a compositional bias: acidic residues. Phosphothreonine is present on Thr32. Phosphoserine occurs at positions 54 and 56. A compositionally biased stretch (gly residues) spans Gly148–Gly163. Residues Ser180 and Ser182 each carry the phosphoserine modification. Residue Thr183 is modified to Phosphothreonine. Ser186 bears the Phosphoserine mark. Residues Asn197–His231 are a coiled coil. In terms of domain architecture, LisH spans Glu255 to Asp287. Residues Val359–Ile397 are a coiled coil. Ser385 is subject to Phosphoserine. Positions Cys401 to His477 are disordered. The span at Leu411 to Asp435 shows a compositional bias: basic and acidic residues. Ser453 carries the phosphoserine modification. Residues Cys497 to Val779 form an interaction with RAB11A and RAB11B region. 2 HEAT repeats span residues Leu601–Leu639 and Val640–Gln679. Ser792 carries the post-translational modification Phosphoserine. Residues Val1004–Arg1042 form an HEAT 3 repeat. Ser1149 bears the Phosphoserine mark.

The protein resides in the recycling endosome. Its subcellular location is the golgi apparatus. It is found in the trans-Golgi network. Its function is as follows. Regulates intracellular cholesterol distribution from recycling endosomes to the trans-Golgi network through interactions with RAB11 and OSBP. Functions in membrane tethering and promotes OSBP-mediated cholesterol transfer between RAB11-bound recycling endosomes and OSBP-bound Golgi-like membranes. The sequence is that of RAB11-binding protein RELCH from Homo sapiens (Human).